A 727-amino-acid chain; its full sequence is Engulfment and cell motility protein 1 (727 aa).

Tyr18 carries the phosphotyrosine; by HCK modification. An N6-acetyllysine mark is found at Lys100 and Lys105. Residue Tyr216 is modified to Phosphotyrosine; by HCK. The region spanning Ala319 to Leu492 is the ELMO domain. Ser344 carries the post-translational modification Phosphoserine. 2 positions are modified to phosphotyrosine; by HCK: Tyr395 and Tyr511. One can recognise a PH domain in the interval Arg555–Asp676. An SH3-binding motif is present at residues Pro707 to Pro714. Tyr720 carries the post-translational modification Phosphotyrosine; by HCK.

In terms of assembly, interacts with ADGRB1. Interacts directly with the SH3-domain of DOCK1 via its SH3-binding site. Part of a complex with DOCK1 and RAC1. Part of a complex with DOCK1 and CRK isoform CRK-II. Interacts with PLEKHG6. Interacts with HCK (via SH3 domain). Interacts with ADGRB3. Interacts with DOCK5. In terms of processing, phosphorylated by HCK. As to expression, widely expressed, with a higher expression in the spleen and placenta.

It is found in the cytoplasm. Its subcellular location is the cell membrane. Functionally, involved in cytoskeletal rearrangements required for phagocytosis of apoptotic cells and cell motility. Acts in association with DOCK1 and CRK. Was initially proposed to be required in complex with DOCK1 to activate Rac Rho small GTPases. May enhance the guanine nucleotide exchange factor (GEF) activity of DOCK1. This is Engulfment and cell motility protein 1 (ELMO1) from Homo sapiens (Human).